Here is a 480-residue protein sequence, read N- to C-terminus: MIVADSECRAELKDYLRFAPGGVGDSGPGEEQRESRARRGPRGPSAFIPVEEVLREGAESLEQHLGLEALMSSGRVDNLAVVMGLHPDYFTSFWRLHYLLLHTDGPLASSWRHYIAIMAAARHQCSYLVGSHMAEFLQTGGDPEWLLGLHRAPEKLRKLSEINKLLAHRPWLITKEHIQALLKTGEHTWSLAELIQALVLLTHCHSLSSFVFGCGILPEGDADGSPAPQAPTPPSEQSSPPSRDPLNNSGGFESARDVEALMERMQQLQESLLRDEGTSQEEMESRFELEKSESLLVTPSADILEPSPHPDMLCFVEDPTFGYEDFTRRGAQAPPTFRAQDYTWEDHGYSLIQRLYPEGGQLLDEKFQAAYSLTYNTIAMHSGVDTSVLRRAIWNYIHCVFGIRYDDYDYGEVNQLLERNLKVYIKTVACYPEKTTRRMYNLFWRHFRHSEKVHVNLLLLEARMQAALLYALRAITRYMT.

The residue at position 1 (Met-1) is an N-acetylmethionine. The tract at residues 20-45 is disordered; the sequence is PGGVGDSGPGEEQRESRARRGPRGPS. The N-terminal domain; mediates the alkylhydroperoxide reductase activity stretch occupies residues 66–239; it reads GLEALMSSGR…APTPPSEQSS (174 aa). The active-site Cysteine sulfenic acid (-SOH) intermediate is the Cys-125. Lys-175 participates in a covalent cross-link: Glycyl lysine isopeptide (Lys-Gly) (interchain with G-Cter in ubiquitin). Disordered stretches follow at residues 222–252 and 272–291; these read ADGS…SGGF and LLRD…ELEK. Residue Ser-249 is modified to Phosphoserine. Positions 308 to 480 are C-terminal domain; mediates TORC1 regulation; the sequence is PHPDMLCFVE…ALRAITRYMT (173 aa). Residues 374 to 377, Thr-386, and Glu-451 contribute to the L-leucine site; that span reads TYNT.

This sequence belongs to the sestrin family. In terms of assembly, interacts with the GATOR2 complex which is composed of MIOS, SEC13, SEH1L, WDR24 and WDR59; the interaction is negatively regulated by leucine. Conveys leucine availability via direct interaction with SEH1L and WDR24 components of the GATOR2 complex. Interacts with RRAGA, RRAGB, RRAGC and RRAGD; may function as a guanine nucleotide dissociation inhibitor for RRAGs and regulate them. May interact with the TORC2 complex. Interacts with KEAP1, RBX1, SQSTM and ULK1; to regulate the degradation of KEAP1. May also associate with the complex composed of TSC1, TSC2 and the AMP-responsive protein kinase/AMPK to regulate TORC1 signaling. May interact with PRDX1. In terms of processing, phosphorylated by ULK1 at multiple sites. Post-translationally, ubiquitinated at Lys-175 by RNF167 via 'Lys-63'-linked polyubiquitination in response to leucine deprivation: ubiquitination promotes SESN2-interaction with the GATOR2 complex, leading to inhibit the TORC1 signaling pathway. Deubiquitinated at Lys-175 by STAMBPL1, promoting the TORC1 signaling pathway. Ubiquitinated by RNF186; ubiquitination mediates proteasomal degradation. As to expression, widely expressed.

It is found in the cytoplasm. It catalyses the reaction a hydroperoxide + L-cysteinyl-[protein] = S-hydroxy-L-cysteinyl-[protein] + an alcohol. Its function is as follows. Functions as an intracellular leucine sensor that negatively regulates the mTORC1 signaling pathway through the GATOR complex. In absence of leucine, binds the GATOR subcomplex GATOR2 and prevents mTORC1 signaling. Binding of leucine to SESN2 disrupts its interaction with GATOR2 thereby activating the TORC1 signaling pathway. This stress-inducible metabolic regulator also plays a role in protection against oxidative and genotoxic stresses. May negatively regulate protein translation in response to endoplasmic reticulum stress, via mTORC1. May positively regulate the transcription by NFE2L2 of genes involved in the response to oxidative stress by facilitating the SQSTM1-mediated autophagic degradation of KEAP1. May also mediate TP53 inhibition of TORC1 signaling upon genotoxic stress. Moreover, may prevent the accumulation of reactive oxygen species (ROS) through the alkylhydroperoxide reductase activity born by the N-terminal domain of the protein. Was originally reported to contribute to oxidative stress resistance by reducing PRDX1. However, this could not be confirmed. The protein is Sestrin-2 of Homo sapiens (Human).